Reading from the N-terminus, the 639-residue chain is Chaperone protein DnaK 1 (639 aa).

Phosphothreonine; by autocatalysis is present on T199. Residues 603 to 612 (QQQAQAQQAP) are compositionally biased toward low complexity. A disordered region spans residues 603 to 639 (QQQAQAQQAPGGEGEQEAKQDDNVVDAEFEEVKDEKK). Residues 625-639 (NVVDAEFEEVKDEKK) show a composition bias toward acidic residues.

The protein belongs to the heat shock protein 70 family.

Acts as a chaperone. The polypeptide is Chaperone protein DnaK 1 (Photobacterium profundum (strain SS9)).